Consider the following 44-residue polypeptide: Putative protein PsbN (44 aa).

Residues 3–23 form a helical membrane-spanning segment; sequence IISFLSTIFLGFFIISTTIYS.

The protein belongs to the PsbN family.

It is found in the plastid. Its subcellular location is the chloroplast thylakoid membrane. In terms of biological role, may play a role in photosystem I and II biogenesis. This chain is Putative protein PsbN, found in Euglena gracilis.